A 408-amino-acid polypeptide reads, in one-letter code: Protein SPATA31F3 (408 aa).

The chain crosses the membrane as a helical span at residues 11–31 (VGYPFYTYGSIIIIALIIWQV). Positions 51 to 71 (QKVKQRAKEKTPRARRHSRKE) are disordered. Position 152 is a phosphoserine (S152). Disordered stretches follow at residues 297 to 316 (TKTKKAEKSPPSTKRPMKGA) and 351 to 408 (LPLS…SASS). The span at 351–392 (LPLSSGSSKRSPLLTCATQPENPSHVSVSTSAEGTCLPQEST) shows a compositional bias: polar residues.

This sequence belongs to the SPATA31 family.

Its subcellular location is the membrane. This chain is Protein SPATA31F3 (SPATA31F3), found in Bos taurus (Bovine).